The sequence spans 423 residues: Glutamate-1-semialdehyde 2,1-aminomutase (423 aa).

K259 is subject to N6-(pyridoxal phosphate)lysine.

It belongs to the class-III pyridoxal-phosphate-dependent aminotransferase family. HemL subfamily. As to quaternary structure, homodimer. It depends on pyridoxal 5'-phosphate as a cofactor.

It is found in the cytoplasm. It catalyses the reaction (S)-4-amino-5-oxopentanoate = 5-aminolevulinate. Its pathway is porphyrin-containing compound metabolism; protoporphyrin-IX biosynthesis; 5-aminolevulinate from L-glutamyl-tRNA(Glu): step 2/2. The protein is Glutamate-1-semialdehyde 2,1-aminomutase of Thermosipho melanesiensis (strain DSM 12029 / CIP 104789 / BI429).